A 380-amino-acid polypeptide reads, in one-letter code: Transporter PPE51 (380 aa).

The residue at position 1 (Met-1) is an N-acetylmethionine.

This sequence belongs to the mycobacterial PPE family. As to quaternary structure, interacts with PE19 and PE25.

The protein resides in the cell outer membrane. Small molecule-selective channel required for the uptake of nutrients across the outer mycomembrane. Transports glycerol and glucose. Involved in sensitivity to M.tuberculosis growth inhibitory agrichemical 3,3-bis-di(methylsulfonyl)propionamide (3bMP1). Transports maltose and lactose disaccharides. Involved in sensitivity to bactericidal thio-disaccharide T-6 compound (1,6-anhydro-3-deoxy-4-S-(2,3,4,6-tetra-O-acetyl-beta-D-glucopyranosyl)-D-glycero-hexopyranos-2-ulose). Transports extracellular trehalose, a component of the cell envelope, and trehalose analog, 6-azido trehalose (6-TreAz), which has antimycobacterial activity. Functionally, plays a role in response to starvation and stress, likely environment within the host. Inhibits canonical autophagy in infected mouse RAW264.7 macrophages. Inhibits autophagy and enhances intracellular bacterial survival when expressed in human macrophage-like THP-1 cells. Inhibits Toll-like receptor 2 (TLR2)-dependent signaling leading to autophagy inhibition, increased intracellular bacterial survival, reduced phagocytosis and reduced secretion of interleukin 6 (IL-6) and IL-1 in infected mouse primary bone marrow-derived macrophage (BMDM) cells. Required for virulence and persistence in the lungs and spleens of intranasally infected C57BL/6J mice. Blocks the antibacterial effects of TLR2 activation, suppresses MHC class II-dependent antigen presentation, and reduces IFN-gamma and TNF-alpha-producing CD4(+) T cells during infection in C57BL/6J mice. The polypeptide is Transporter PPE51 (PPE51) (Mycobacterium tuberculosis (strain CDC 1551 / Oshkosh)).